Reading from the N-terminus, the 200-residue chain is Insulin, isoform 2 (200 aa).

The disordered stretch occupies residues 148–200; the sequence is EVDSSPQPQGSESLPAQPPAQPAPQPEPQQAREPSPEVSCCGLWPRRPQRSQN. Residues 163–174 are compositionally biased toward pro residues; that stretch reads AQPPAQPAPQPE. The segment covering 175–184 has biased composition (low complexity); the sequence is PQQAREPSPE.

As to expression, expressed in pancreas, eye and, to a lower extent, in limb.

The protein is Insulin, isoform 2 (INS-IGF2) of Homo sapiens (Human).